The chain runs to 356 residues: Histidinol-phosphate aminotransferase (356 aa).

At lysine 214 the chain carries N6-(pyridoxal phosphate)lysine.

It belongs to the class-II pyridoxal-phosphate-dependent aminotransferase family. Histidinol-phosphate aminotransferase subfamily. Homodimer. Pyridoxal 5'-phosphate serves as cofactor.

It carries out the reaction L-histidinol phosphate + 2-oxoglutarate = 3-(imidazol-4-yl)-2-oxopropyl phosphate + L-glutamate. The protein operates within amino-acid biosynthesis; L-histidine biosynthesis; L-histidine from 5-phospho-alpha-D-ribose 1-diphosphate: step 7/9. This chain is Histidinol-phosphate aminotransferase, found in Escherichia coli O1:K1 / APEC.